We begin with the raw amino-acid sequence, 507 residues long: Maturase K (507 aa).

It belongs to the intron maturase 2 family. MatK subfamily.

The protein localises to the plastid. The protein resides in the chloroplast. Its function is as follows. Usually encoded in the trnK tRNA gene intron. Probably assists in splicing its own and other chloroplast group II introns. This chain is Maturase K, found in Liriodendron tulipifera (Tuliptree).